The following is a 270-amino-acid chain: uncharacterized protein (270 aa).

Basic and acidic residues-rich tracts occupy residues 1 to 13 (MSEFKIVSRKDLY) and 49 to 73 (EVERTDSSLDLKESNNSAHEQKEEK). Disordered regions lie at residues 1–76 (MSEF…KQEE), 90–111 (STSPAQEEQGSSTQEKDTPQTE), and 204–270 (KKRR…FRTE). Residues 90–102 (STSPAQEEQGSST) are compositionally biased toward polar residues. A compositionally biased stretch (basic residues) spans 204-216 (KKRRPGQKQRAAK). Positions 218–235 (LALERTKERDTKAREIKK) are enriched in basic and acidic residues. Positions 236–253 (QLKKKFHKRGGKKNKKKV) are enriched in basic residues.

This is an uncharacterized protein from Saccharomyces cerevisiae (strain ATCC 204508 / S288c) (Baker's yeast).